Here is a 396-residue protein sequence, read N- to C-terminus: Ribosomal RNA large subunit methyltransferase I (396 aa).

Residues 2–81 (SVRLVLAKGR…ESIDIAFFSR (80 aa)) enclose the PUA domain.

Belongs to the methyltransferase superfamily. RlmI family.

The protein resides in the cytoplasm. It carries out the reaction cytidine(1962) in 23S rRNA + S-adenosyl-L-methionine = 5-methylcytidine(1962) in 23S rRNA + S-adenosyl-L-homocysteine + H(+). Its function is as follows. Specifically methylates the cytosine at position 1962 (m5C1962) of 23S rRNA. The polypeptide is Ribosomal RNA large subunit methyltransferase I (Shigella flexneri).